Here is a 93-residue protein sequence, read N- to C-terminus: UPF0728 protein C10orf53 homolog (93 aa).

The protein belongs to the UPF0728 family.

The protein is UPF0728 protein C10orf53 homolog of Mus musculus (Mouse).